A 342-amino-acid polypeptide reads, in one-letter code: Heat-inducible transcription repressor HrcA (342 aa).

Belongs to the HrcA family.

Its function is as follows. Negative regulator of class I heat shock genes (grpE-dnaK-dnaJ and groELS operons). Prevents heat-shock induction of these operons. This is Heat-inducible transcription repressor HrcA from Mesoplasma florum (strain ATCC 33453 / NBRC 100688 / NCTC 11704 / L1) (Acholeplasma florum).